The primary structure comprises 162 residues: Fibroblast growth factor 22 (162 aa).

The signal sequence occupies residues 1-22 (MRSRLWLGLAWLLLARAPGAPG).

This sequence belongs to the heparin-binding growth factors family. In terms of assembly, interacts with FGFR1 and FGFR2. Interacts with FGFBP1. Preferentially expressed in skin; low expression in brain. Expressed in the inner root sheath of the hair follicle.

The protein localises to the secreted. Plays a role in the fasting response, glucose homeostasis, lipolysis and lipogenesis. Can stimulate cell proliferation (in vitro). May be involved in hair development. This is Fibroblast growth factor 22 (Fgf22) from Mus musculus (Mouse).